A 173-amino-acid polypeptide reads, in one-letter code: Photosystem I assembly protein Ycf3 (173 aa).

3 TPR repeats span residues 35 to 68, 72 to 105, and 120 to 153; these read AFVYYRDGMSAQAEGEYAEALEYYEEALTLEEDT, GYILYNMGLIYASNGDHDKALELYHQAIELNPRL, and GEKAKEDGDHDGGEALFDQAADYWIRAIRMAPNN.

The protein belongs to the Ycf3 family.

It is found in the cellular thylakoid membrane. Essential for the assembly of the photosystem I (PSI) complex. May act as a chaperone-like factor to guide the assembly of the PSI subunits. This Trichormus variabilis (strain ATCC 29413 / PCC 7937) (Anabaena variabilis) protein is Photosystem I assembly protein Ycf3.